Consider the following 317-residue polypeptide: Type II methyltransferase M.MgeORF184P (317 aa).

Belongs to the N(4)/N(6)-methyltransferase family.

It carries out the reaction a 2'-deoxyadenosine in DNA + S-adenosyl-L-methionine = an N(6)-methyl-2'-deoxyadenosine in DNA + S-adenosyl-L-homocysteine + H(+). Its function is as follows. Probably recognizes the double-stranded sequence 5'-CTAT-3' and methylates A-3 on only one strand; as the bacterial DNA is methylated on this sequence and this is the only type II methylase in the genome, it is probably responsible for all of the methylation on this site in the genome. The chain is Type II methyltransferase M.MgeORF184P from Mycoplasma genitalium (strain ATCC 33530 / DSM 19775 / NCTC 10195 / G37) (Mycoplasmoides genitalium).